An 80-amino-acid chain; its full sequence is Iota-conotoxin-like r11c (80 aa).

A signal peptide spans 1 to 19 (MKLCLTFLLVLMILASVTG). Residues 20 to 35 (EKSSKHTLSRAARVKN) constitute a propeptide that is removed on maturation. Pro-38 and Pro-47 each carry 4-hydroxyproline; partial. Intrachain disulfides connect Cys-41–Cys-55, Cys-48–Cys-58, Cys-54–Cys-63, and Cys-57–Cys-72. A 4-hydroxyproline modification is found at Pro-65. Leu-78 carries the D-leucine modification. A propeptide (removed by a carboxypeptidase) is located at residue Arg-80.

Post-translationally, the natural D-Leu form of the peptide is more potent than the synthetic L-Leu form. As to expression, expressed by the venom duct.

The protein localises to the secreted. Functionally, iota-conotoxins bind to voltage-gated sodium channels (Nav) and act as agonists by shifting the voltage-dependence of activation to more hyperpolarized levels. Causes circular motion, convulsions, copious urination, rigid paralysis and death upon intracranial injection into mice. Causes unbalanced swimming, swimming in diagonal and vertical motion and death, when injected intraperitoneally into goldfish. L-Leu and D-Leu forms are active on both nerve and muscle. This Conus radiatus (Rayed cone) protein is Iota-conotoxin-like r11c.